The sequence spans 281 residues: Pantothenate synthetase (281 aa).

30-37 (MGYLHEGH) provides a ligand contact to ATP. Residue His-37 is the Proton donor of the active site. Gln-61 contributes to the (R)-pantoate binding site. Residue Gln-61 coordinates beta-alanine. Residue 147–150 (GEKD) participates in ATP binding. Gln-153 provides a ligand contact to (R)-pantoate. Residues Ile-176 and 184-187 (KSSR) each bind ATP.

This sequence belongs to the pantothenate synthetase family. In terms of assembly, homodimer.

It localises to the cytoplasm. The enzyme catalyses (R)-pantoate + beta-alanine + ATP = (R)-pantothenate + AMP + diphosphate + H(+). It functions in the pathway cofactor biosynthesis; (R)-pantothenate biosynthesis; (R)-pantothenate from (R)-pantoate and beta-alanine: step 1/1. Catalyzes the condensation of pantoate with beta-alanine in an ATP-dependent reaction via a pantoyl-adenylate intermediate. This chain is Pantothenate synthetase, found in Clostridium botulinum (strain Langeland / NCTC 10281 / Type F).